The primary structure comprises 351 residues: Ribosomal RNA small subunit methyltransferase H (351 aa).

Residues 48-50 (GGY), aspartate 67, phenylalanine 94, aspartate 115, and glutamine 122 contribute to the S-adenosyl-L-methionine site. The disordered stretch occupies residues 274-351 (AAQASRHVPG…PAPQGRGPRR (78 aa)).

It belongs to the methyltransferase superfamily. RsmH family.

The protein resides in the cytoplasm. The enzyme catalyses cytidine(1402) in 16S rRNA + S-adenosyl-L-methionine = N(4)-methylcytidine(1402) in 16S rRNA + S-adenosyl-L-homocysteine + H(+). Its function is as follows. Specifically methylates the N4 position of cytidine in position 1402 (C1402) of 16S rRNA. The protein is Ribosomal RNA small subunit methyltransferase H of Methylorubrum extorquens (strain PA1) (Methylobacterium extorquens).